Here is a 248-residue protein sequence, read N- to C-terminus: Tetraspanin-16 (248 aa).

At 1-7 the chain is on the cytoplasmic side; that stretch reads MSEIRTG. A helical membrane pass occupies residues 8–28; that stretch reads FLTMATIILICIGLTMTGTGL. The Extracellular portion of the chain corresponds to 29 to 44; it reads YYRKTVSKCIRETDGS. A helical membrane pass occupies residues 45–65; it reads FVVIGLLLLVIPQFALYAICC. Topologically, residues 66–69 are cytoplasmic; that stretch reads HSKR. A helical membrane pass occupies residues 70–90; that stretch reads MFTIYIYAMIFVSIVLGGYSL. Residues 91 to 208 are Extracellular-facing; that stretch reads KCFIYNTTFG…MSILKAIVHQ (118 aa). Residues Asn96 and Asn141 are each glycosylated (N-linked (GlcNAc...) asparagine). A helical membrane pass occupies residues 209–229; the sequence is WKYLSMFSYPALFLVCLSLAI. The Cytoplasmic portion of the chain corresponds to 230–248; it reads SRSIMDTFDEPDDYRGYYS.

The protein belongs to the tetraspanin (TM4SF) family.

Its subcellular location is the membrane. Functionally, may be involved in the regulation of cell differentiation. This is Tetraspanin-16 (TET16) from Arabidopsis thaliana (Mouse-ear cress).